A 479-amino-acid polypeptide reads, in one-letter code: Zinc metalloproteinase/disintegrin PMMP-1 (479 aa).

A signal peptide spans 1–20; it reads MIQVLLVTICLAVFPYQGSS. Positions 21–188 are excised as a propeptide; the sequence is IILESGNVND…PIKKASKLVV (168 aa). One can recognise a Peptidase M12B domain in the interval 194 to 390; sequence RYVELVIVAD…HNPQCILNKP (197 aa). 3 disulfide bridges follow: C305/C385, C345/C369, and C347/C352. H330 provides a ligand contact to Zn(2+). E331 is a catalytic residue. Zn(2+) contacts are provided by H334 and H339. A glycan (N-linked (GlcNAc...) asparagine) is linked at N368. Residues 391 to 408 constitute a propeptide that is removed on maturation; that stretch reads LRTDTVSTPVSGNELLEA. The Disintegrin domain maps to 398-479; it reads TPVSGNELLE…ADCPRNGLYG (82 aa). 6 cysteine pairs are disulfide-bonded: C412–C427, C414–C422, C421–C444, C435–C441, C440–C465, and C453–C472. A Cell attachment site motif is present at residues 457-459; it reads RGD.

The protein belongs to the venom metalloproteinase (M12B) family. P-II subfamily. P-IIa sub-subfamily. As to quaternary structure, monomer. Zn(2+) serves as cofactor. As to expression, expressed by the venom gland.

It localises to the secreted. Functionally, impairs hemostasis in the envenomed animal. Its function is as follows. Inhibits platelet aggregation. The polypeptide is Zinc metalloproteinase/disintegrin PMMP-1 (Protobothrops mucrosquamatus (Taiwan habu)).